The sequence spans 260 residues: Universal stress protein PHOS34 (260 aa).

Residues 1–33 (MNPDSDYPHLPNIKIHHPSSPRHSHHHSSSTPS) constitute a chloroplast transit peptide. Positions 1–42 (MNPDSDYPHLPNIKIHHPSSPRHSHHHSSSTPSAATPTPTAG) are disordered. Residues 14–28 (KIHHPSSPRHSHHHS) show a composition bias toward basic residues. ATP is bound at residue proline 18. Position 20 is a phosphoserine; by MAPK3 and MAPK6 (serine 20). Residues 29–41 (SSTPSAATPTPTA) are compositionally biased toward low complexity. Valine 80 contacts ATP. The segment at 92–118 (GPLPLQTPPPPSAATDPGAQPKPSQED) is disordered. ATP is bound by residues 170-179 (GSRGFGAEKR) and 187-189 (SVS). Residues 209–260 (RDGPAPPGNVGATREAIVTVKSRRDDDDDDDEDHEAKIAAAASDHHEHIKDE) form a disordered region. The residue at position 230 (serine 230) is a Phosphoserine. The segment covering 251–260 (SDHHEHIKDE) has biased composition (basic and acidic residues).

Belongs to the universal stress protein A family. Phosphorylated by MAPK3 and MAPK6 after pathogenic elicitation (e.g. bacterial flg22, Phytophthora infestans zoospores and xylanase).

It is found in the plastid. It localises to the chloroplast. This Arabidopsis thaliana (Mouse-ear cress) protein is Universal stress protein PHOS34.